A 600-amino-acid chain; its full sequence is Zinc metalloproteinase-disintegrin-like stejnihagin-B (600 aa).

A signal peptide spans 1–20 (MIEVLLVTICLAVFPYQGSS). A propeptide spanning residues 21-191 (IILESGNVND…KASQLVVTAE (171 aa)) is cleaved from the precursor. A Pyrrolidone carboxylic acid modification is found at Gln192. One can recognise a Peptidase M12B domain in the interval 198 to 389 (RYVKLAIVAD…YNPQCILNAL (192 aa)). Asn261 and Asn317 each carry an N-linked (GlcNAc...) asparagine glycan. Intrachain disulfides connect Cys306–Cys384, Cys346–Cys368, and Cys348–Cys351. His331 is a binding site for Zn(2+). Residue Glu332 is part of the active site. His335 and His341 together coordinate Zn(2+). Positions 397-483 (PPVCGNELLE…DCPTDSFHRN (87 aa)) constitute a Disintegrin domain. Ca(2+)-binding residues include Val399, Asn402, Leu404, Glu406, Glu409, and Asp412. 14 disulfides stabilise this stretch: Cys400–Cys429, Cys411–Cys424, Cys413–Cys419, Cys423–Cys446, Cys437–Cys443, Cys442–Cys468, Cys455–Cys475, Cys462–Cys494, Cys487–Cys499, Cys506–Cys556, Cys521–Cys565, Cys534–Cys544, Cys551–Cys587, and Cys581–Cys593. A glycan (N-linked (GlcNAc...) asparagine) is linked at Asn425. The D/ECD-tripeptide motif lies at 461–463 (ECD). Asn467 is a glycosylation site (N-linked (GlcNAc...) asparagine). Residue Asn513 is glycosylated (N-linked (GlcNAc...) asparagine).

The protein belongs to the venom metalloproteinase (M12B) family. P-III subfamily. P-IIIa sub-subfamily. In terms of assembly, monomer. The cofactor is Zn(2+). In terms of tissue distribution, expressed by the venom gland.

The protein localises to the secreted. This metalloproteinase-disintegrin-like impairs hemostasis in the envenomed animal. The polypeptide is Zinc metalloproteinase-disintegrin-like stejnihagin-B (Trimeresurus stejnegeri (Chinese green tree viper)).